A 1024-amino-acid chain; its full sequence is Protein translocase subunit SecA (1024 aa).

ATP is bound by residues Gln143, 161 to 165 (GEGKT), and Asp661. Residues 970–1024 (HKAAESVYTASSDEPETNQEESPQQPAIAEKKPGRNDLCPCGSGKKYKNCHGQQP) form a disordered region. The Zn(2+) site is built by Cys1008, Cys1010, Cys1019, and His1020.

Belongs to the SecA family. As to quaternary structure, monomer and homodimer. Part of the essential Sec protein translocation apparatus which comprises SecA, SecYEG and auxiliary proteins SecDF. Other proteins may also be involved. Zn(2+) is required as a cofactor.

It is found in the cell inner membrane. The protein resides in the cytoplasm. The enzyme catalyses ATP + H2O + cellular proteinSide 1 = ADP + phosphate + cellular proteinSide 2.. In terms of biological role, part of the Sec protein translocase complex. Interacts with the SecYEG preprotein conducting channel. Has a central role in coupling the hydrolysis of ATP to the transfer of proteins into and across the cell membrane, serving as an ATP-driven molecular motor driving the stepwise translocation of polypeptide chains across the membrane. In Pelodictyon phaeoclathratiforme (strain DSM 5477 / BU-1), this protein is Protein translocase subunit SecA.